Consider the following 175-residue polypeptide: Disulfide bond formation protein B (175 aa).

At Met-1–Val-13 the chain is on the cytoplasmic side. A helical membrane pass occupies residues Leu-14 to Tyr-30. Over Leu-31–Tyr-48 the chain is Periplasmic. Cys-40 and Cys-43 form a disulfide bridge. Residues Ala-49–Gly-65 form a helical membrane-spanning segment. The Cytoplasmic segment spans residues Arg-66 to Met-70. The helical transmembrane segment at Thr-71–Ala-88 threads the bilayer. Topologically, residues Arg-89–Asn-144 are periplasmic. A disulfide bridge connects residues Cys-103 and Cys-130. Residues Trp-145–Arg-163 form a helical membrane-spanning segment. The Cytoplasmic segment spans residues Ala-164–Ala-175.

It belongs to the DsbB family.

Its subcellular location is the cell inner membrane. Required for disulfide bond formation in some periplasmic proteins. Acts by oxidizing the DsbA protein. This chain is Disulfide bond formation protein B, found in Paracidovorax citrulli (strain AAC00-1) (Acidovorax citrulli).